Reading from the N-terminus, the 25-residue chain is Chlorocatechol 1,2-dioxygenase 1 (25 aa).

Belongs to the intradiol ring-cleavage dioxygenase family. Fe(3+) serves as cofactor.

It carries out the reaction 3,5-dichlorocatechol + O2 = (2E,4E)-2,4-dichloromuconate + 2 H(+). Its pathway is xenobiotic degradation; 2-(2,4-dichlorophenoxy)propanoate degradation. The polypeptide is Chlorocatechol 1,2-dioxygenase 1 (tfdC) (Delftia acidovorans (Pseudomonas acidovorans)).